We begin with the raw amino-acid sequence, 546 residues long: uncharacterized protein (546 aa).

The 72-residue stretch at 52–123 folds into the SLH domain; the sequence is SVAELRDVQP…NTIEQLLQEN (72 aa).

The protein belongs to the OprB family.

This is an uncharacterized protein from Synechocystis sp. (strain ATCC 27184 / PCC 6803 / Kazusa).